The primary structure comprises 162 residues: Crossover junction endodeoxyribonuclease RuvC (162 aa).

Catalysis depends on residues D7, E67, and D140. Mg(2+) is bound by residues D7, E67, and D140.

The protein belongs to the RuvC family. Homodimer which binds Holliday junction (HJ) DNA. The HJ becomes 2-fold symmetrical on binding to RuvC with unstacked arms; it has a different conformation from HJ DNA in complex with RuvA. In the full resolvosome a probable DNA-RuvA(4)-RuvB(12)-RuvC(2) complex forms which resolves the HJ. Requires Mg(2+) as cofactor.

The protein resides in the cytoplasm. The enzyme catalyses Endonucleolytic cleavage at a junction such as a reciprocal single-stranded crossover between two homologous DNA duplexes (Holliday junction).. Its function is as follows. The RuvA-RuvB-RuvC complex processes Holliday junction (HJ) DNA during genetic recombination and DNA repair. Endonuclease that resolves HJ intermediates. Cleaves cruciform DNA by making single-stranded nicks across the HJ at symmetrical positions within the homologous arms, yielding a 5'-phosphate and a 3'-hydroxyl group; requires a central core of homology in the junction. The consensus cleavage sequence is 5'-(A/T)TT(C/G)-3'. Cleavage occurs on the 3'-side of the TT dinucleotide at the point of strand exchange. HJ branch migration catalyzed by RuvA-RuvB allows RuvC to scan DNA until it finds its consensus sequence, where it cleaves and resolves the cruciform DNA. This Pseudothermotoga lettingae (strain ATCC BAA-301 / DSM 14385 / NBRC 107922 / TMO) (Thermotoga lettingae) protein is Crossover junction endodeoxyribonuclease RuvC.